Consider the following 96-residue polypeptide: MAKYEILYIIRPNIEEEAKNALVARFDSILTDNGATIVESKAWEKRRLAYEIKDFREGLYHIVNVEANNDEALKEFDRLSKINGDILRHMIVKLDA.

Belongs to the bacterial ribosomal protein bS6 family.

Functionally, binds together with bS18 to 16S ribosomal RNA. The polypeptide is Small ribosomal subunit protein bS6 (Streptococcus suis (strain 98HAH33)).